The chain runs to 222 residues: Lipid transferase CIDEC (222 aa).

Over residues 1–19 (MAMYTAVSTSVVTQQQLSE) the composition is skewed to polar residues. Disordered stretches follow at residues 1 to 33 (MAMY…CRVT) and 203 to 222 (EQPP…KMLQ). Residues 1–33 (MAMYTAVSTSVVTQQQLSEPSAEAPRARPCRVT) form a required for liquid-liquid phase separation (LLPS) region. Positions 26-103 (RARPCRVTTA…VLHKGQKWQP (78 aa)) constitute a CIDE-N domain.

It belongs to the CIDE family. As to quaternary structure, homodimer. Homooligomer; undergoes liquid-liquid phase separation (LLPS) via its N-terminus, facilitating lipid droplet fusion, occurs at the lipid droplet contact sites. Interacts with CIDEA. Interacts with PLIN1. Interacts with NFAT5; this interaction is direct and retains NFAT5 in the cytoplasm. Interacts with CEBPB. Interacts with isoform CLSTN3beta of CLSTN3; inhibiting the lipid transferase activity of CIDEC. In terms of processing, ubiquitinated and targeted to proteasomal degradation, resulting in a short half-life (about 15 minutes in 3T3-L1 cells). Protein stability depends on triaclyglycerol synthesis, fatty acid availability and lipid droplet formation.

Its subcellular location is the lipid droplet. The protein resides in the endoplasmic reticulum. The protein localises to the nucleus. The enzyme catalyses a triacyl-sn-glycerol(in) = a triacyl-sn-glycerol(out). In terms of biological role, lipid transferase specifically expressed in white adipose tissue, which promotes unilocular lipid droplet formation by mediating lipid droplet fusion. Lipid droplet fusion promotes their enlargement, restricting lipolysis and favoring lipid storage. Localizes on the lipid droplet surface, at focal contact sites between lipid droplets, and mediates atypical lipid droplet fusion by undergoing liquid-liquid phase separation (LLPS) and promoting directional net neutral lipid transfer from the smaller to larger lipid droplets. The transfer direction may be driven by the internal pressure difference between the contacting lipid droplet pair. Its role in neutral lipid transfer and lipid droplet enlargement is activated by the interaction with PLIN1. May also act as a CEBPB coactivator in the white adipose tissue to control the expression of a subset of CEBPB downstream target genes, including SOCS1, SOCS3, TGFB1, TGFBR1, ID2 and XDH. When overexpressed in preadipocytes, induces apoptosis or increases cell susceptibility to apoptosis induced by serum deprivation or TGFB treatment. This chain is Lipid transferase CIDEC, found in Bos taurus (Bovine).